We begin with the raw amino-acid sequence, 507 residues long: ATP synthase subunit alpha, chloroplastic (507 aa).

Residue 170–177 (GDRQTGKT) participates in ATP binding.

The protein belongs to the ATPase alpha/beta chains family. F-type ATPases have 2 components, CF(1) - the catalytic core - and CF(0) - the membrane proton channel. CF(1) has five subunits: alpha(3), beta(3), gamma(1), delta(1), epsilon(1). CF(0) has four main subunits: a, b, b' and c.

It is found in the plastid. The protein localises to the chloroplast thylakoid membrane. It carries out the reaction ATP + H2O + 4 H(+)(in) = ADP + phosphate + 5 H(+)(out). Its function is as follows. Produces ATP from ADP in the presence of a proton gradient across the membrane. The alpha chain is a regulatory subunit. The polypeptide is ATP synthase subunit alpha, chloroplastic (Dioscorea elephantipes (Elephant's foot yam)).